The following is a 339-amino-acid chain: Starvation-sensing protein RspB (339 aa).

Zn(2+) contacts are provided by Cys-37, His-59, Cys-89, Cys-92, Cys-95, Cys-103, and Glu-144.

It belongs to the zinc-containing alcohol dehydrogenase family. Zn(2+) serves as cofactor.

Functionally, not known; probable catabolic enzyme. The polypeptide is Starvation-sensing protein RspB (Escherichia coli (strain K12)).